An 878-amino-acid chain; its full sequence is DNA mismatch repair protein MutS (878 aa).

An ATP-binding site is contributed by 626-633; the sequence is GPNMAGKS.

The protein belongs to the DNA mismatch repair MutS family.

Functionally, this protein is involved in the repair of mismatches in DNA. It is possible that it carries out the mismatch recognition step. This protein has a weak ATPase activity. This Paracoccus denitrificans (strain Pd 1222) protein is DNA mismatch repair protein MutS.